The sequence spans 177 residues: Inorganic pyrophosphatase (177 aa).

Residues Lys31, Arg45, and Tyr57 each coordinate substrate. Mg(2+)-binding residues include Asp67, Asp72, and Asp104. Residue Tyr141 participates in substrate binding.

It belongs to the PPase family. In terms of assembly, homohexamer. It depends on Mg(2+) as a cofactor.

The protein localises to the cytoplasm. The catalysed reaction is diphosphate + H2O = 2 phosphate + H(+). In terms of biological role, catalyzes the hydrolysis of inorganic pyrophosphate (PPi) forming two phosphate ions. The sequence is that of Inorganic pyrophosphatase from Halobacterium salinarum (strain ATCC 700922 / JCM 11081 / NRC-1) (Halobacterium halobium).